We begin with the raw amino-acid sequence, 23 residues long: Septenin 2b (23 aa).

As to expression, expressed in skin glands.

The protein localises to the secreted. Functionally, may act as an antimicrobial peptide. This Osteopilus septentrionalis (Cuban treefrog) protein is Septenin 2b.